A 288-amino-acid polypeptide reads, in one-letter code: Killer cell lectin-like receptor 2 (288 aa).

Residues 1–45 (MSEQEVTYTTLRFHKSSGLQNPVRPEETQRPRDVGHRECSVPWKF) are Cytoplasmic-facing. Residues 46–66 (IVIVLGILCFLLLLTVAVLVI) traverse the membrane as a helical; Signal-anchor for type II membrane protein segment. Topologically, residues 67 to 288 (HIFRDGQEKH…SALQRDEDES (222 aa)) are extracellular. 3 N-linked (GlcNAc...) asparagine glycosylation sites follow: Asn94, Asn105, and Asn114. Residues 144–263 (QVEGYWFCCG…THGCICEKRL (120 aa)) enclose the C-type lectin domain. Cystine bridges form between Cys151–Cys156, Cys169–Cys257, Cys173–Cys259, and Cys238–Cys251. Asn177 carries an N-linked (GlcNAc...) asparagine glycan.

Homodimer; disulfide-linked.

It is found in the membrane. Its function is as follows. Receptor on natural killer (NK) cells for class I MHC. In Mus musculus (Mouse), this protein is Killer cell lectin-like receptor 2 (Klra2).